Consider the following 403-residue polypeptide: Deubiquitinase and deneddylase Dub1 (403 aa).

The span at 1–11 shows a compositional bias: polar residues; that stretch reads MLSPTNSTSKT. The tract at residues 1–24 is disordered; the sequence is MLSPTNSTSKTAPVPPRDSSKPVL. The helical transmembrane segment at 40 to 60 threads the bilayer; it reads TALAVLLVVVTLGLILLFYSF. Residues 77–132 form a disordered region; it reads KEQPTISIPVPLPSPPLAVPRPSTPPAPTPAISRPSTPSAPKPSTPPPLLPKAPKP. 2 stretches are compositionally biased toward pro residues: residues 86 to 105 and 114 to 130; these read VPLPSPPLAVPRPSTPPAPT and PSAPKPSTPPPLLPKAP. Residues histidine 277, aspartate 294, and cysteine 347 contribute to the active site.

This sequence belongs to the peptidase C48 family.

The protein localises to the secreted. The protein resides in the host cell. It is found in the membrane. Effector proteins function to alter host cell physiology and promote bacterial survival in host tissues. This protease possesses deubiquitinating and deneddylating activities. The sequence is that of Deubiquitinase and deneddylase Dub1 (cdu1) from Chlamydia trachomatis serovar L2b (strain UCH-1/proctitis).